Consider the following 235-residue polypeptide: Cytidylate kinase (235 aa).

Position 11-19 (G11–T19) interacts with ATP.

It belongs to the cytidylate kinase family. Type 1 subfamily.

It localises to the cytoplasm. It carries out the reaction CMP + ATP = CDP + ADP. The enzyme catalyses dCMP + ATP = dCDP + ADP. The polypeptide is Cytidylate kinase (Syntrophotalea carbinolica (strain DSM 2380 / NBRC 103641 / GraBd1) (Pelobacter carbinolicus)).